The primary structure comprises 120 residues: Flagellar protein FliT (120 aa).

The interval 1 to 50 (MERHQHLLSEYQQILTLSEQMLMLATVENWNALVDLEMTYLKAVENTANI) is required for homodimerization. A fliD binding region spans residues 60–98 (LQELLRQKLRSILENEIEIKRLLQRRLDKLSELVGQSTR).

Belongs to the FliT family. As to quaternary structure, homodimer. Interacts with FliD and FlhC.

The protein localises to the cytoplasm. Its subcellular location is the cytosol. Functionally, dual-function protein that regulates the transcription of class 2 flagellar operons and that also acts as an export chaperone for the filament-capping protein FliD. As a transcriptional regulator, acts as an anti-FlhDC factor; it directly binds FlhC, thus inhibiting the binding of the FlhC/FlhD complex to class 2 promoters, resulting in decreased expression of class 2 flagellar operons. As a chaperone, effects FliD transition to the membrane by preventing its premature polymerization, and by directing it to the export apparatus. The protein is Flagellar protein FliT of Yersinia pestis bv. Antiqua (strain Antiqua).